A 735-amino-acid polypeptide reads, in one-letter code: Alpha-adducin (735 aa).

Met1 is subject to N-acetylmethionine. The segment covering 1–11 (MNGDTRAAVVT) has biased composition (low complexity). The tract at residues 1-21 (MNGDTRAAVVTSPPPTTAPHK) is disordered. Phosphoserine occurs at positions 12, 59, and 64. Position 331 is a phosphothreonine (Thr331). Phosphoserine occurs at positions 334, 353, and 355. Thr358 carries the post-translational modification Phosphothreonine. Phosphoserine is present on residues Ser364, Ser366, Ser408, and Ser427. Disordered stretches follow at residues 418-487 (GHSF…AVPN) and 576-735 (RREV…KSDS). Thr429 is subject to Phosphothreonine. Ser431 and Ser436 each carry phosphoserine. Positions 440-455 (QQREKTRWLHSGRGDD) are enriched in basic and acidic residues. Position 445 is a phosphothreonine; by ROCK2 (Thr445). 2 positions are modified to phosphoserine: Ser464 and Ser465. Thr480 is modified (phosphothreonine; by ROCK2). Ser481 is subject to Phosphoserine; by PKA. A compositionally biased stretch (basic and acidic residues) spans 576 to 601 (RREVERKQKGSEENLDETREQKEKSP). 3 positions are modified to phosphoserine: Ser586, Ser600, and Ser605. Phosphothreonine is present on Thr610. Ser613 is subject to Phosphoserine. Phosphothreonine is present on Thr614. Positions 698-712 (GSPMDPGSDGSPGKS) are enriched in low complexity. Phosphoserine occurs at positions 705, 708, and 712. Residues 713–735 (PSKKKKKFRTPSFLKKSKKKSDS) are compositionally biased toward basic residues. Ser714 carries the phosphoserine; by PKC modification. The interval 715-732 (KKKKKFRTPSFLKKSKKK) is interaction with calmodulin. Phosphoserine; by PKA and PKC is present on Ser724.

It belongs to the aldolase class II family. Adducin subfamily. Heterodimer of an alpha and a beta subunit or an alpha and a gamma subunit.

The protein resides in the cytoplasm. The protein localises to the cytoskeleton. It is found in the cell membrane. Membrane-cytoskeleton-associated protein that promotes the assembly of the spectrin-actin network. Binds to calmodulin. In Mus musculus (Mouse), this protein is Alpha-adducin (Add1).